The sequence spans 219 residues: Cytidylate kinase (219 aa).

An ATP-binding site is contributed by 21-29 (GPAASGKGT).

The protein belongs to the cytidylate kinase family. Type 1 subfamily.

The protein localises to the cytoplasm. It catalyses the reaction CMP + ATP = CDP + ADP. The catalysed reaction is dCMP + ATP = dCDP + ADP. The polypeptide is Cytidylate kinase (Rickettsia felis (strain ATCC VR-1525 / URRWXCal2) (Rickettsia azadi)).